Reading from the N-terminus, the 521-residue chain is Sphingolipid C9-methyltransferase 2 (521 aa).

2 helical membrane-spanning segments follow: residues 60 to 80 (VLISILTIVPWWLSWKVGGGF) and 85 to 105 (FFAIIVDLPMLAAWWLTISAI). Residues 225 to 226 (YT), 262 to 270 (MLDIGCGWG), 288 to 293 (TLGRNQ), and 318 to 319 (YR) each bind S-adenosyl-L-methionine.

It belongs to the CFA/CMAS family.

It localises to the membrane. The catalysed reaction is a (4E,8E)-4-sphinga-4,8-dienine ceramide + S-adenosyl-L-methionine = a 9-methyl-(4E,8E)-sphinga-4,8-dienine ceramide + S-adenosyl-L-homocysteine + H(+). Its pathway is lipid metabolism; sphingolipid metabolism. Functionally, catalyzes methylation of the sphingoid base component of glucosylceramides (GluCers) at the C9-position. Sphingolipid C9-methylation requires 4,8-desaturated ceramides as substrates. Glucosylceramides play important roles in growth, differentiation and pathogenicity. The methyl group at the C9-position distinguishes fungal glucosylceramides from those of plants and animals and may thus play a role in host-pathogen interactions enabling the host to recognize the fungal attack and initiate specific defense responses. However, C-9 methylation of GlcCers is not essential for the sensitivity of F.graminearum to plant defensins MsDef1 and RsAFP2. The chain is Sphingolipid C9-methyltransferase 2 from Gibberella zeae (strain ATCC MYA-4620 / CBS 123657 / FGSC 9075 / NRRL 31084 / PH-1) (Wheat head blight fungus).